The chain runs to 233 residues: Uridylate kinase (233 aa).

ATP contacts are provided by residues 9–12, Gly-51, and Arg-55; that span reads KLSG. Residues Asp-69 and 130–137 contribute to the UMP site; that span reads TGNPFFST. Asn-158, Tyr-164, and Asp-167 together coordinate ATP.

It belongs to the UMP kinase family. Homohexamer.

The protein resides in the cytoplasm. The enzyme catalyses UMP + ATP = UDP + ADP. Its pathway is pyrimidine metabolism; CTP biosynthesis via de novo pathway; UDP from UMP (UMPK route): step 1/1. With respect to regulation, inhibited by UTP. In terms of biological role, catalyzes the reversible phosphorylation of UMP to UDP. The sequence is that of Uridylate kinase from Thermus thermophilus (strain ATCC BAA-163 / DSM 7039 / HB27).